A 372-amino-acid chain; its full sequence is Putative 8-amino-7-oxononanoate synthase (372 aa).

Position 20 (Arg-20) interacts with substrate. 94–95 serves as a coordination point for pyridoxal 5'-phosphate; sequence GY. His-119 lines the substrate pocket. Residues Ser-167, 192 to 195, and 223 to 226 contribute to the pyridoxal 5'-phosphate site; these read DDAH and TLSK. N6-(pyridoxal phosphate)lysine is present on Lys-226. Thr-337 contributes to the substrate binding site.

Belongs to the class-II pyridoxal-phosphate-dependent aminotransferase family. BioF subfamily. As to quaternary structure, homodimer. Requires pyridoxal 5'-phosphate as cofactor.

The enzyme catalyses 6-carboxyhexanoyl-[ACP] + L-alanine + H(+) = (8S)-8-amino-7-oxononanoate + holo-[ACP] + CO2. The protein operates within cofactor biosynthesis; biotin biosynthesis. In terms of biological role, catalyzes the decarboxylative condensation of pimeloyl-[acyl-carrier protein] and L-alanine to produce 8-amino-7-oxononanoate (AON), [acyl-carrier protein], and carbon dioxide. The protein is Putative 8-amino-7-oxononanoate synthase (bioF) of Methanocaldococcus jannaschii (strain ATCC 43067 / DSM 2661 / JAL-1 / JCM 10045 / NBRC 100440) (Methanococcus jannaschii).